A 259-amino-acid chain; its full sequence is 5'-nucleotidase SurE (259 aa).

Asp-13, Asp-14, Ser-44, and Asn-100 together coordinate a divalent metal cation.

It belongs to the SurE nucleotidase family. A divalent metal cation serves as cofactor.

It localises to the cytoplasm. It catalyses the reaction a ribonucleoside 5'-phosphate + H2O = a ribonucleoside + phosphate. Nucleotidase that shows phosphatase activity on nucleoside 5'-monophosphates. The protein is 5'-nucleotidase SurE of Bacteroides thetaiotaomicron (strain ATCC 29148 / DSM 2079 / JCM 5827 / CCUG 10774 / NCTC 10582 / VPI-5482 / E50).